Reading from the N-terminus, the 592-residue chain is Putative esterase (592 aa).

The chain crosses the membrane as a helical span at residues 12–32; sequence LTLIAYLSVLMGVSVYFYVLI. N-linked (GlcNAc...) asparagine; by host glycosylation is found at Asn68, Asn83, Asn95, Asn447, and Asn510. His513 serves as the catalytic Charge relay system. N-linked (GlcNAc...) asparagine; by host glycosylation is present at Asn528.

This sequence belongs to the type-B carboxylesterase/lipase family.

It is found in the membrane. The enzyme catalyses a carboxylic ester + H2O = an alcohol + a carboxylate + H(+). The protein is Putative esterase of Spodoptera frugiperda (Fall armyworm).